The following is an 84-amino-acid chain: U1-theraphotoxin-Hs1a (84 aa).

A signal peptide spans 1 to 22 (MKVTLIAILTCAAVLVLHTTAA). A propeptide spanning residues 23-48 (EELEESQLMEVGMPDTELAAVDEERL) is cleaved from the precursor. Cystine bridges form between Cys-51–Cys-65, Cys-55–Cys-76, and Cys-70–Cys-81.

Belongs to the neurotoxin 12 (Hwtx-2) family. 02 (Hwtx-2) subfamily. In terms of tissue distribution, expressed by the venom gland.

Its subcellular location is the secreted. Its function is as follows. Blocks neuromuscular transmission. Acts cooperatively to potentiate the activity of huwentoxin-I. Paralyzes locusts and kills mice following intracerebroventricular injection. This is U1-theraphotoxin-Hs1a from Cyriopagopus schmidti (Chinese bird spider).